We begin with the raw amino-acid sequence, 169 residues long: Protein-export protein SecB (169 aa).

It belongs to the SecB family. In terms of assembly, homotetramer, a dimer of dimers. One homotetramer interacts with 1 SecA dimer.

It localises to the cytoplasm. Its function is as follows. One of the proteins required for the normal export of preproteins out of the cell cytoplasm. It is a molecular chaperone that binds to a subset of precursor proteins, maintaining them in a translocation-competent state. It also specifically binds to its receptor SecA. The protein is Protein-export protein SecB of Haemophilus influenzae (strain PittEE).